The following is a 938-amino-acid chain: Isoleucine--tRNA ligase (938 aa).

The 'HIGH' region signature appears at 58-68; sequence PYANGSIHIGH. The residue at position 183 (Lys183) is an N6-acetyllysine. Glu561 lines the L-isoleucyl-5'-AMP pocket. The short motif at 602–606 is the 'KMSKS' region element; it reads KMSKS. Residue Lys605 coordinates ATP. Cys901, Cys904, Cys921, and Cys924 together coordinate Zn(2+).

It belongs to the class-I aminoacyl-tRNA synthetase family. IleS type 1 subfamily. In terms of assembly, monomer. Zn(2+) serves as cofactor.

The protein resides in the cytoplasm. It catalyses the reaction tRNA(Ile) + L-isoleucine + ATP = L-isoleucyl-tRNA(Ile) + AMP + diphosphate. Its function is as follows. Catalyzes the attachment of isoleucine to tRNA(Ile). As IleRS can inadvertently accommodate and process structurally similar amino acids such as valine, to avoid such errors it has two additional distinct tRNA(Ile)-dependent editing activities. One activity is designated as 'pretransfer' editing and involves the hydrolysis of activated Val-AMP. The other activity is designated 'posttransfer' editing and involves deacylation of mischarged Val-tRNA(Ile). In Escherichia coli O17:K52:H18 (strain UMN026 / ExPEC), this protein is Isoleucine--tRNA ligase.